The primary structure comprises 138 residues: MTEILRYCQGIMQRGIKESIKTLYYTGELKFGTLVGVDKVGNRYYENRQEIYGRHRWVEYGDYKSNDPTTIPPEYHSWIHHVSDKLPSEMLPFSPTYKRPHIANPTGTDGAYTPPNFLFNIEKSKEELQKEEKNDNKQ.

The disordered stretch occupies residues 97 to 116; that stretch reads YKRPHIANPTGTDGAYTPPN.

This sequence belongs to the complex I NDUFA12 subunit family. As to quaternary structure, complex I is composed of 45 different subunits.

It is found in the mitochondrion inner membrane. Functionally, accessory subunit of the mitochondrial membrane respiratory chain NADH dehydrogenase (Complex I), that is believed not to be involved in catalysis. Complex I functions in the transfer of electrons from NADH to the respiratory chain. The immediate electron acceptor for the enzyme is believed to be ubiquinone. The polypeptide is NADH dehydrogenase [ubiquinone] 1 alpha subcomplex subunit 12 (ndufa12) (Dictyostelium discoideum (Social amoeba)).